Reading from the N-terminus, the 415-residue chain is MARHPQLRLVKALLLLGLNPVSASLQDQHCESLSLASNISGLQCNASVDLIGTCWPRSPAGQLVVRPCPAFFYGVRYNTTNNGYRECLANGSWAARVNYSECQEILNEEKKSKVHYHVAVIINYLGHCISLVALLVAFVLFLRLRSIRCLRNIIHWNLISAFILRNATWFVVQLTMSPEVHQSNVGWCRLVTAAYNYFHVTNFFWMFGEGCYLHTAIVLTYSTDRLRKWMFICIGWGVPFPIIVAWAIGKLYYDNEKCWFGKRPGVYTDYIYQGPMILVLLINFIFLFNIVRILMTKLRASTTSETIQYRKAVKATLVLLPLLGITYMLFFVNPGEDEVSRVVFIYFNSFLESFQGFFVSVFYCFLNSEVRSAIRKRWHRWQDKHSIRARVARAMSIPTSPTRVSFHSIKQSTAV.

Residues 1–23 (MARHPQLRLVKALLLLGLNPVSA) form the signal peptide. Over 24–111 (SLQDQHCESL…CQEILNEEKK (88 aa)) the chain is Extracellular. 3 cysteine pairs are disulfide-bonded: C30-C54, C44-C87, and C68-C102. N38, N78, and N98 each carry an N-linked (GlcNAc...) asparagine glycan. The interval 99 to 108 (YSECQEILNE) is important for peptide agonist binding. A helical transmembrane segment spans residues 112 to 142 (SKVHYHVAVIINYLGHCISLVALLVAFVLFL). Topologically, residues 143-149 (RLRSIRC) are cytoplasmic. Residues 150–174 (LRNIIHWNLISAFILRNATWFVVQL) traverse the membrane as a helical segment. Over 175-189 (TMSPEVHQSNVGWCR) the chain is Extracellular. An intrachain disulfide couples C188 to C258. Residues 190–218 (LVTAAYNYFHVTNFFWMFGEGCYLHTAIV) form a helical membrane-spanning segment. Residues 219 to 225 (LTYSTDR) are Cytoplasmic-facing. Residues 226-253 (LRKWMFICIGWGVPFPIIVAWAIGKLYY) form a helical membrane-spanning segment. The Extracellular segment spans residues 254-269 (DNEKCWFGKRPGVYTD). A helical membrane pass occupies residues 270–295 (YIYQGPMILVLLINFIFLFNIVRILM). The tract at residues 280–290 (LLINFIFLFNI) is important for antagonist binding. Over 296-306 (TKLRASTTSET) the chain is Cytoplasmic. S301 carries the phosphoserine; by PKA modification. The helical transmembrane segment at 307–331 (IQYRKAVKATLVLLPLLGITYMLFF) threads the bilayer. Topologically, residues 332-338 (VNPGEDE) are extracellular. The chain crosses the membrane as a helical span at residues 339 to 368 (VSRVVFIYFNSFLESFQGFFVSVFYCFLNS). Residues 369-415 (EVRSAIRKRWHRWQDKHSIRARVARAMSIPTSPTRVSFHSIKQSTAV) lie on the Cytoplasmic side of the membrane.

It belongs to the G-protein coupled receptor 2 family. Heterodimer; heterodimerizes with GPER1. Interacts (via N-terminal extracellular domain) with CRH and UCN. Interacts with DLG1; this inhibits endocytosis of CRHR1 after agonist binding. Post-translationally, C-terminal Ser or Thr residues may be phosphorylated. Phosphorylation at Ser-301 by PKA prevents maximal coupling to Gq-protein, and thereby negatively regulates downstream signaling. Expressed abundantly in the pituitary, cerebral cortex, hippocampus, amygdala and cerebellum.

The protein localises to the cell membrane. Its subcellular location is the endosome. Functionally, G-protein coupled receptor for CRH (corticotropin-releasing factor) and UCN (urocortin). Has high affinity for CRH and UCN. Ligand binding causes a conformation change that triggers signaling via guanine nucleotide-binding proteins (G proteins) and down-stream effectors, such as adenylate cyclase. Promotes the activation of adenylate cyclase, leading to increased intracellular cAMP levels. Inhibits the activity of the calcium channel CACNA1H. Required for normal embryonic development of the adrenal gland and for normal hormonal responses to stress. Plays a role in the response to anxiogenic stimuli. This is Corticotropin-releasing factor receptor 1 (CRHR1) from Macaca mulatta (Rhesus macaque).